A 43-amino-acid chain; its full sequence is Protein PsbN (43 aa).

A helical transmembrane segment spans residues 4–24 (ATVLSITFAVILIAITGLAVY).

The protein belongs to the PsbN family.

The protein resides in the cellular thylakoid membrane. May play a role in photosystem I and II biogenesis. The chain is Protein PsbN from Synechocystis sp. (strain ATCC 27184 / PCC 6803 / Kazusa).